We begin with the raw amino-acid sequence, 641 residues long: UvrABC system protein C (641 aa).

In terms of domain architecture, GIY-YIG spans 16-95; it reads ESPGVYRFWD…IKQYEPRFNI (80 aa). A UVR domain is found at 208 to 243; the sequence is TEYLRRLEKDMRAAAAAEDFERAARLRDDAAALRLA.

It belongs to the UvrC family. Interacts with UvrB in an incision complex.

It is found in the cytoplasm. The UvrABC repair system catalyzes the recognition and processing of DNA lesions. UvrC both incises the 5' and 3' sides of the lesion. The N-terminal half is responsible for the 3' incision and the C-terminal half is responsible for the 5' incision. This chain is UvrABC system protein C, found in Acidothermus cellulolyticus (strain ATCC 43068 / DSM 8971 / 11B).